We begin with the raw amino-acid sequence, 80 residues long: Cell division activator CedA (80 aa).

It belongs to the CedA family.

Functionally, activates the cell division inhibited by chromosomal DNA over-replication. This chain is Cell division activator CedA, found in Salmonella typhimurium (strain LT2 / SGSC1412 / ATCC 700720).